The chain runs to 542 residues: CTP synthase (542 aa).

Residues Met1 to Ile265 form an amidoligase domain region. Ser13 is a CTP binding site. Ser13 contributes to the UTP binding site. Ser14–Ile19 serves as a coordination point for ATP. L-glutamine is bound at residue Tyr54. Asp71 is a binding site for ATP. 2 residues coordinate Mg(2+): Asp71 and Glu139. Residues Asp146–Glu148, Lys186–Gln191, and Lys222 each bind CTP. UTP contacts are provided by residues Lys186 to Gln191 and Lys222. The Glutamine amidotransferase type-1 domain maps to Thr291–Leu541. Gly353 serves as a coordination point for L-glutamine. The Nucleophile; for glutamine hydrolysis role is filled by Cys380. L-glutamine-binding positions include Phe381–Gln384, Glu404, and Arg469. Residues His514 and Glu516 contribute to the active site.

Belongs to the CTP synthase family. As to quaternary structure, homotetramer.

It catalyses the reaction UTP + L-glutamine + ATP + H2O = CTP + L-glutamate + ADP + phosphate + 2 H(+). The enzyme catalyses L-glutamine + H2O = L-glutamate + NH4(+). The catalysed reaction is UTP + NH4(+) + ATP = CTP + ADP + phosphate + 2 H(+). It functions in the pathway pyrimidine metabolism; CTP biosynthesis via de novo pathway; CTP from UDP: step 2/2. Its activity is regulated as follows. Allosterically activated by GTP, when glutamine is the substrate; GTP has no effect on the reaction when ammonia is the substrate. The allosteric effector GTP functions by stabilizing the protein conformation that binds the tetrahedral intermediate(s) formed during glutamine hydrolysis. Inhibited by the product CTP, via allosteric rather than competitive inhibition. Catalyzes the ATP-dependent amination of UTP to CTP with either L-glutamine or ammonia as the source of nitrogen. Regulates intracellular CTP levels through interactions with the four ribonucleotide triphosphates. The sequence is that of CTP synthase from Brucella abortus (strain 2308).